The following is a 411-amino-acid chain: Ferrochelatase, mitochondrial (411 aa).

The N-terminal 41 residues, 1-41 (MAAFRAAHRLLGHILRNESSAGLVTQRWSSSAAVASVPKSS), are a transit peptide targeting the mitochondrion. The disordered stretch occupies residues 34 to 55 (VASVPKSSDPKPHAQPDKRKPK). The segment covering 41 to 51 (SDPKPHAQPDK) has biased composition (basic and acidic residues). Positions 102, 110, and 117 each coordinate protoporphyrin IX. C183 is a [2Fe-2S] cluster binding site. Catalysis depends on residues H217 and D370. C390, C393, and C398 together coordinate [2Fe-2S] cluster.

The protein belongs to the ferrochelatase family. As to quaternary structure, homodimer. Homotetramer. The cofactor is [2Fe-2S] cluster.

The protein localises to the mitochondrion inner membrane. The enzyme catalyses heme b + 2 H(+) = protoporphyrin IX + Fe(2+). The protein operates within porphyrin-containing compound metabolism; protoheme biosynthesis; protoheme from protoporphyrin-IX: step 1/1. Its function is as follows. Catalyzes the ferrous insertion into protoporphyrin IX. This is Ferrochelatase, mitochondrial from Xenopus laevis (African clawed frog).